The following is a 128-amino-acid chain: Transcription antitermination protein NusB (128 aa).

It belongs to the NusB family.

Involved in transcription antitermination. Required for transcription of ribosomal RNA (rRNA) genes. Binds specifically to the boxA antiterminator sequence of the ribosomal RNA (rrn) operons. In Listeria innocua serovar 6a (strain ATCC BAA-680 / CLIP 11262), this protein is Transcription antitermination protein NusB.